Here is a 238-residue protein sequence, read N- to C-terminus: Cysteine-rich venom protein kaouthin-2 (238 aa).

A signal peptide spans 1-19; that stretch reads MIAFIVLLSLAAVLQQSSG. A propeptide spanning residues 20–25 is cleaved from the precursor; sequence TVDFAS. In terms of domain architecture, SCP spans 38–164; sequence VDKHNALRRS…SSKYLYVCQY (127 aa). Intrachain disulfides connect C75–C153, C92–C165, C148–C162, C184–C191, C187–C196, C200–C233, C209–C227, and C218–C231. The region spanning 200–233 is the ShKT domain; that stretch reads CKHHNVFSNCQSLAKQNACQTEWMKSKCAASCFC.

In terms of tissue distribution, expressed by the venom gland.

Its subcellular location is the secreted. The chain is Cysteine-rich venom protein kaouthin-2 from Naja kaouthia (Monocled cobra).